Here is a 339-residue protein sequence, read N- to C-terminus: MLKAQISKVVAGQHLSEAEAAEAMDIIMAGEATPAQIAAFLTALRLKGEMVDEITGFARSMRRRAIPLTTSHPVFVDTCGTGGDGRQTFNISTTAAFVVAGAGVAVAKHGNRSVSSRCGSADMLEALGIKVDLPPDAVARCLDEVGMAFLFAPVFHGAMKYAAGPRREIGIRTAFNLLGPLTNPAGAPCQLVGVYDPDLTETVAAVLGRLGSRRAYVVHGSDGLDEVTITGPSKITCLDKGAIRTYTFTPEDVGLPRANLADLAGGTATDNAAIARAVLSGTRGPARDVVLINAAFALLAAGAADTLQQALALAESSIDSGAAAAKLQAMVAWVESWAA.

5-phospho-alpha-D-ribose 1-diphosphate-binding positions include glycine 80, 83 to 84 (GD), threonine 88, 90 to 93 (NIST), 108 to 116 (KHGNRSVSS), and serine 120. Glycine 80 is an anthranilate binding site. Residue serine 92 participates in Mg(2+) binding. Asparagine 111 provides a ligand contact to anthranilate. An anthranilate-binding site is contributed by arginine 166. Positions 225 and 226 each coordinate Mg(2+).

It belongs to the anthranilate phosphoribosyltransferase family. As to quaternary structure, homodimer. The cofactor is Mg(2+).

The catalysed reaction is N-(5-phospho-beta-D-ribosyl)anthranilate + diphosphate = 5-phospho-alpha-D-ribose 1-diphosphate + anthranilate. It participates in amino-acid biosynthesis; L-tryptophan biosynthesis; L-tryptophan from chorismate: step 2/5. In terms of biological role, catalyzes the transfer of the phosphoribosyl group of 5-phosphorylribose-1-pyrophosphate (PRPP) to anthranilate to yield N-(5'-phosphoribosyl)-anthranilate (PRA). The polypeptide is Anthranilate phosphoribosyltransferase (Moorella thermoacetica (strain ATCC 39073 / JCM 9320)).